The following is a 325-amino-acid chain: tRNA dimethylallyltransferase (325 aa).

Residue 25–32 participates in ATP binding; the sequence is GNTGSGKS. 27 to 32 contacts substrate; sequence TGSGKS. The interaction with substrate tRNA stretch occupies residues 50 to 53; it reads DSRQ.

Belongs to the IPP transferase family. In terms of assembly, monomer. The cofactor is Mg(2+).

The enzyme catalyses adenosine(37) in tRNA + dimethylallyl diphosphate = N(6)-dimethylallyladenosine(37) in tRNA + diphosphate. Catalyzes the transfer of a dimethylallyl group onto the adenine at position 37 in tRNAs that read codons beginning with uridine, leading to the formation of N6-(dimethylallyl)adenosine (i(6)A). This chain is tRNA dimethylallyltransferase, found in Dehalococcoides mccartyi (strain ATCC BAA-2266 / KCTC 15142 / 195) (Dehalococcoides ethenogenes (strain 195)).